We begin with the raw amino-acid sequence, 203 residues long: Small ribosomal subunit protein eS1 (203 aa).

It belongs to the eukaryotic ribosomal protein eS1 family.

In Methanosarcina acetivorans (strain ATCC 35395 / DSM 2834 / JCM 12185 / C2A), this protein is Small ribosomal subunit protein eS1.